The primary structure comprises 145 residues: D-aminoacyl-tRNA deacylase (145 aa).

Residues 137 to 138 (GP) carry the Gly-cisPro motif, important for rejection of L-amino acids motif.

It belongs to the DTD family. As to quaternary structure, homodimer.

The protein localises to the cytoplasm. The catalysed reaction is glycyl-tRNA(Ala) + H2O = tRNA(Ala) + glycine + H(+). It carries out the reaction a D-aminoacyl-tRNA + H2O = a tRNA + a D-alpha-amino acid + H(+). Functionally, an aminoacyl-tRNA editing enzyme that deacylates mischarged D-aminoacyl-tRNAs. Also deacylates mischarged glycyl-tRNA(Ala), protecting cells against glycine mischarging by AlaRS. Acts via tRNA-based rather than protein-based catalysis; rejects L-amino acids rather than detecting D-amino acids in the active site. By recycling D-aminoacyl-tRNA to D-amino acids and free tRNA molecules, this enzyme counteracts the toxicity associated with the formation of D-aminoacyl-tRNA entities in vivo and helps enforce protein L-homochirality. The sequence is that of D-aminoacyl-tRNA deacylase from Pseudoalteromonas atlantica (strain T6c / ATCC BAA-1087).